The sequence spans 217 residues: UPF0711 protein C18orf21 homolog (217 aa).

S126 bears the Phosphoserine mark. 2 positions are modified to phosphothreonine: T130 and T139. Residues 131–190 (AANKASPKTPKRTAPGSANLGQSTNGSKGKSPSLTIRTPTSGQSTPICSSRNGSKRKKHF) form a disordered region. Positions 149–182 (NLGQSTNGSKGKSPSLTIRTPTSGQSTPICSSRN) are enriched in polar residues.

The protein belongs to the UPF0711 family.

The polypeptide is UPF0711 protein C18orf21 homolog (Mus musculus (Mouse)).